The primary structure comprises 151 residues: MAANSQGNFDGKFEALDLAELTKKQPWWRKLFGQESGPSAEKYSVATQLVIGGVTGWCTGFVFQKVGKLAATAVGGGFFLLQLANHTGYIKVDWQRVEKDMKKAKEQLKIRKNKQIPTEVKSKAEEVVSFVKKNVLVTGGFFGGFLLGMAS.

At 1–42 the chain is on the cytoplasmic side; the sequence is MAANSQGNFDGKFEALDLAELTKKQPWWRKLFGQESGPSAEK. Residues 43–63 traverse the membrane as a helical segment; sequence YSVATQLVIGGVTGWCTGFVF. The Mitochondrial intermembrane portion of the chain corresponds to 64–69; the sequence is QKVGKL. Residues 70 to 90 traverse the membrane as a helical segment; the sequence is AATAVGGGFFLLQLANHTGYI. Residues 91 to 126 lie on the Cytoplasmic side of the membrane; it reads KVDWQRVEKDMKKAKEQLKIRKNKQIPTEVKSKAEE. A helical transmembrane segment spans residues 127 to 147; the sequence is VVSFVKKNVLVTGGFFGGFLL. Residues 148-151 are Mitochondrial intermembrane-facing; the sequence is GMAS.

The protein belongs to the FUN14 family. In terms of tissue distribution, highly expressed in platelet (at protein level). Expressed in liver, brain, heart and muscle.

The protein localises to the mitochondrion outer membrane. The protein resides in the nucleus. Binds directly and specifically 1,2-Diacyl-sn-glycero-3-phospho-(1'-myo-inositol-3',4',5'-bisphosphate) (PIP3) leading to the recruitment of PIP3 to mitochondria and may play a role in the regulation of the platelet activation via AKT/GSK3B/cGMP signaling pathways. May act as transcription factor that regulates SREBP1 (isoform SREBP-1C) expression in order to modulate triglyceride (TG) homeostasis in hepatocytes. This Mus musculus (Mouse) protein is FUN14 domain-containing protein 2.